The primary structure comprises 177 residues: Large ribosomal subunit protein uL6 (177 aa).

Belongs to the universal ribosomal protein uL6 family. Part of the 50S ribosomal subunit.

This protein binds to the 23S rRNA, and is important in its secondary structure. It is located near the subunit interface in the base of the L7/L12 stalk, and near the tRNA binding site of the peptidyltransferase center. This Pectobacterium atrosepticum (strain SCRI 1043 / ATCC BAA-672) (Erwinia carotovora subsp. atroseptica) protein is Large ribosomal subunit protein uL6.